A 122-amino-acid chain; its full sequence is Large ribosomal subunit protein uL14 (122 aa).

It belongs to the universal ribosomal protein uL14 family. As to quaternary structure, part of the 50S ribosomal subunit. Forms a cluster with proteins L3 and L19. In the 70S ribosome, L14 and L19 interact and together make contacts with the 16S rRNA in bridges B5 and B8.

Binds to 23S rRNA. Forms part of two intersubunit bridges in the 70S ribosome. This is Large ribosomal subunit protein uL14 from Azoarcus sp. (strain BH72).